Consider the following 66-residue polypeptide: Alpha-conotoxin Vc1a (66 aa).

The N-terminal stretch at Met-1–Gly-25 is a signal peptide. Positions Arg-26–Lys-47 are excised as a propeptide. Intrachain disulfides connect Cys-51–Cys-57 and Cys-52–Cys-65. The ser-Xaa-Pro motif, crucial for potent interaction with nAChR stretch occupies residues Ser-53 to Pro-55. Key region for inhibition of alpha-9-alpha-10/CHRNA9-CHRNA10 nAChR regions lie at residues Asp-54–Arg-56 and Asp-60–Ile-64. Pro-55 carries the 4-hydroxyproline modification. At Glu-63 the chain carries 4-carboxyglutamate. The residue at position 65 (Cys-65) is a Cysteine amide.

It belongs to the conotoxin A superfamily. In terms of processing, vc1.1 is described as having no post-translational modifications (except C-terminal amidation), whereas Vc1a contains a hydroxyproline at Pro-55 and a 4-carboxyglutamate at Glu-63 (and a C-terminal amidation). Hydroxylation of Pro-55 is not important for inhibition of alpha-9-alpha-10/CHRNA9-CHRNA10 nAChRs, since [P6O]Vc1.1 (Pro-55 hydroxylated) shows similar inhibition than native toxin (IC(50)=99.1 nM). In contrast, hydroxylation of Pro-55 seems to impair inhibition of HVA calcium channel currents, since [P6O]Vc1.1 has no effect on HVA calcium channel currents. In vivo, hydroxylation of Pro-55 seems to induce the loss of analgesic effects in rat models of neuropathic pain, since [P6O]Vc1.1 has no effect on mechanical allodynia. Post-translationally, gamma-carboxylation of Glu-63 is not important for inhibition of alpha-9-alpha-10/CHRNA9-CHRNA10 nAChRs, since [E14gamma]Vc1.1 (carboxyglutamate at Glu-63) shows similar inhibition than native toxin (IC(50)=65.3 nM). In contrast, gamma-carboxylation of Glu-63 seems to impair inhibition of HVA calcium channel currents, since [E14gamma]Vc1.1 has no effect on HVA calcium channel currents. In terms of processing, non-native isomers 'ribbon' (with disulfide connectivity C1-C4; C2-C3) and 'beads' (with disulfide connectivity C1-C2; C3-C4) of Vc1.1 also inhibit HVA calcium channel currents in rat DRG neurons (20-30% inhibition at 1 uM toxin). It has been shown that both reduced and alkylated Vc1.1 have no effect on HVA calcium channel currents. The observed activity can be attributed to specific isomers. [C3S]Vc1.1(1-8) mutant is C-terminally amidated. In terms of tissue distribution, expressed by the venom duct.

The protein localises to the secreted. Alpha-conotoxins act on postsynaptic membranes, they bind to the nicotinic acetylcholine receptors (nAChR) and thus inhibit them. This toxin (native toxin Vc1a; hydroxylated and gamma-carboxylated) blocks alpha-9-alpha-10/CHRNA9-CHRNA10 nAChRs (IC(50)=62.9 nM). In contrast to the non-post-translationally modified analog Vc1.1, Vc1a does not inhibit high voltage-activated (HVA) calcium channel currents. In vivo, in contrast to Vc1.1, Vc1a does not show analgesic effects in rat models of neuropathic pain. Functionally, the synthetic peptide Vc1.1 (a non-hydroxylated and non-gamma-carboxylated analog of Vc1a) has two types of targets. It blocks alpha-9-alpha-10/CHRNA9-CHRNA10 nAChRs (on rat receptors, IC(50)=19-109 nM) (with preference for rat over human receptors) and inhibits high voltage-activated (HVA) calcium channel (Cav2.2, Cav2.3) currents by acting on GABA(B) receptors (GABBR1 and GABBR2) (IC(50)=1.7 nM). It also shows moderate inhibition on alpha-6/alpha-3-beta-2-beta-3 (CHRNA6/CHRNA3-CHRNB2-CHRNB3) (IC(50)=140 nM) and alpha-6/alpha-3-beta-4 (CHRNA6/CHRNA3-CHRNB4) (IC(50)=980 nM). On alpha-9-alpha-10/CHRNA9-CHRNA10 nAChR, it most likely interacts with the alpha-10(+)/alpha-9(-)interface of the receptor. In vivo, it acts as a powerful analgesic in rat models of neuropathic pain. This Conus victoriae (Queen Victoria cone) protein is Alpha-conotoxin Vc1a.